We begin with the raw amino-acid sequence, 261 residues long: L-erythrulose-1-phosphate isomerase (261 aa).

Catalysis depends on His99, which acts as the Electrophile. Catalysis depends on Glu172, which acts as the Proton acceptor.

Belongs to the triosephosphate isomerase family.

The enzyme catalyses L-erythrulose 1-phosphate = D-erythrulose 4-phosphate. The protein operates within carbohydrate metabolism. Its function is as follows. Involved in catabolism of D-apiose. Catalyzes the isomerization of L-erythrulose 1-phosphate to D-erythrulose 4-phosphate. The polypeptide is L-erythrulose-1-phosphate isomerase (Rhizobium rhizogenes (strain K84 / ATCC BAA-868) (Agrobacterium radiobacter)).